A 231-amino-acid polypeptide reads, in one-letter code: NifU-like protein 1, chloroplastic (231 aa).

A chloroplast-targeting transit peptide spans Met-1–Leu-69.

This sequence belongs to the NifU family. As to quaternary structure, homodimer; disulfide-linked. In terms of tissue distribution, predominantly expressed in floral stalks and siliques. Expressed in leaves, cauline leaves, flower stalks and flowers (at protein level).

Its subcellular location is the plastid. The protein localises to the chloroplast stroma. Functionally, molecular scaffold for [Fe-S] cluster assembly of chloroplastic iron-sulfur proteins. This Arabidopsis thaliana (Mouse-ear cress) protein is NifU-like protein 1, chloroplastic (NIFU1).